The following is a 387-amino-acid chain: Putative glutamate--cysteine ligase 2 (387 aa).

Belongs to the glutamate--cysteine ligase type 2 family. YbdK subfamily.

It catalyses the reaction L-cysteine + L-glutamate + ATP = gamma-L-glutamyl-L-cysteine + ADP + phosphate + H(+). Functionally, ATP-dependent carboxylate-amine ligase which exhibits weak glutamate--cysteine ligase activity. This Trichormus variabilis (strain ATCC 29413 / PCC 7937) (Anabaena variabilis) protein is Putative glutamate--cysteine ligase 2.